The sequence spans 173 residues: Trafficking regulator of GLUT4 1 (173 aa).

Over residues 1–10 (MANPAQPPLQ) the composition is skewed to pro residues. The disordered stretch occupies residues 1–20 (MANPAQPPLQDPGSTSPLEL). At 1 to 102 (MANPAQPPLQ…QDQEAPKDYL (102 aa)) the chain is on the cytoplasmic side. Phosphoserine occurs at positions 16, 43, 45, 70, 84, and 85. The helical intramembrane region spans 103–123 (VLAIASCFCPVWPLNLIPLIF). Over 124 to 150 (SIMSRSSVQQGDLDGARRLGRLARLLS) the chain is Cytoplasmic. Residues 151-171 (ITFIILGIVIIIVAVTVNFTV) form a helical membrane-spanning segment. Over 172–173 (PK) the chain is Extracellular.

It belongs to the CD225/Dispanin family. Interacts with SLC2A4; the interaction is required for proper SLC2A4 reacycling after insulin stimulation. In terms of tissue distribution, expressed specifically in white and brown adipose tissues.

The protein localises to the cell membrane. It localises to the endomembrane system. It is found in the cytoplasm. The protein resides in the perinuclear region. Functionally, regulates insulin-mediated adipose tissue glucose uptake and transport by modulation of SLC2A4 recycling. Not required for SLC2A4 membrane fusion upon an initial stimulus, but rather is necessary for proper protein recycling during prolonged insulin stimulation. The sequence is that of Trafficking regulator of GLUT4 1 (Trarg1) from Mus musculus (Mouse).